We begin with the raw amino-acid sequence, 214 residues long: Cdc42 effector protein 2 (214 aa).

S2 carries the N-acetylserine modification. The CRIB domain occupies 30 to 44 (ISPPLGDFRHTIHIG). S31, S101, S137, S141, and S145 each carry phosphoserine. Positions 119-177 (LTLPTAQAPPKPPRLHLESPQPSPQPSPQGAGNVDVWRIPEAGSPHNGMSPEPEAEEPF) are disordered.

It belongs to the BORG/CEP family. As to quaternary structure, interacts with CDC42 and RHOQ in a GTP-dependent manner, and with SEPT7.

It localises to the endomembrane system. The protein resides in the cytoplasm. Its subcellular location is the cytoskeleton. In terms of biological role, probably involved in the organization of the actin cytoskeleton. May act downstream of CDC42 to induce actin filament assembly leading to cell shape changes. Induces pseudopodia formation in fibroblasts in a CDC42-dependent manner. This chain is Cdc42 effector protein 2 (Cdc42ep2), found in Mus musculus (Mouse).